Reading from the N-terminus, the 484-residue chain is UDP-N-acetylmuramate--L-alanine ligase (484 aa).

127 to 133 (GTHGKTT) is an ATP binding site.

This sequence belongs to the MurCDEF family.

The protein localises to the cytoplasm. It carries out the reaction UDP-N-acetyl-alpha-D-muramate + L-alanine + ATP = UDP-N-acetyl-alpha-D-muramoyl-L-alanine + ADP + phosphate + H(+). The protein operates within cell wall biogenesis; peptidoglycan biosynthesis. Functionally, cell wall formation. This chain is UDP-N-acetylmuramate--L-alanine ligase, found in Shewanella amazonensis (strain ATCC BAA-1098 / SB2B).